Reading from the N-terminus, the 64-residue chain is Conotoxin Im11.2 (64 aa).

An N-terminal signal peptide occupies residues 1 to 26; sequence MMFRLTSVSCFLLVIVCLNLVVLTNA. 4 disulfides stabilise this stretch: Cys-27–Cys-41, Cys-34–Cys-46, Cys-40–Cys-50, and Cys-45–Cys-54. Asp-57 carries the aspartic acid 1-amide modification. Residues 61–64 constitute a propeptide that is removed on maturation; that stretch reads ATFQ.

The protein belongs to the conotoxin I2 superfamily. In terms of tissue distribution, expressed by the venom duct.

Its subcellular location is the secreted. This chain is Conotoxin Im11.2, found in Conus imperialis (Imperial cone).